The sequence spans 231 residues: GDSL lipase Rv0518 (231 aa).

The N-terminal stretch at 1–20 (MSRPGTYVIGLTLLVGLVVG) is a signal peptide. The active-site Nucleophile is S46. The Proton donor role is filled by D205. The active-site Proton acceptor is the H208.

It belongs to the 'GDSL' lipolytic enzyme family.

The protein resides in the secreted. Its subcellular location is the cell wall. It is found in the extracellular space. It catalyses the reaction a fatty acid ester + H2O = an aliphatic alcohol + a fatty acid + H(+). The enzyme catalyses decanoate ester + H2O = decanoate + an aliphatic alcohol + H(+). The catalysed reaction is an octanoate ester + H2O = an aliphatic alcohol + octanoate + H(+). It carries out the reaction a dodecanoate ester + H2O = an aliphatic alcohol + dodecanoate + H(+). It catalyses the reaction a tetradecanoate ester + H2O = an aliphatic alcohol + tetradecanoate + H(+). Its activity is regulated as follows. Activity is inhibited by the serine modifier phenylmethylsulfonyl fluoride (PMSF). GDSL lipase that catalyzes the hydrolysis of p-nitrophenyl (pNP) esters. pNP-decanoate (C10) is the preferred substrate. It can also use pNP-octanoate (C8), pNP-dodecanoate (C12) and pNP-tetradecanoate (C14). Has lower activity with pNP-butyrate (C4), pNP-palmitate (C16) and pNP-stearate (C18). Does not show phospholipase A1 activity. Might help bacteria to utilize available lipids for its growth as well as provide resistance to various intracellular stresses by cell wall modulation resulting in enhanced intracellular survival. The polypeptide is GDSL lipase Rv0518 (Mycobacterium tuberculosis (strain ATCC 25618 / H37Rv)).